The following is a 288-amino-acid chain: 2-hydroxy-6-oxononadienedioate/2-hydroxy-6-oxononatrienedioate hydrolase (288 aa).

The Proton acceptor role is filled by His267.

It belongs to the AB hydrolase superfamily. MhpC family. As to quaternary structure, homodimer.

The catalysed reaction is (2Z,4E)-2-hydroxy-6-oxonona-2,4-dienedioate + H2O = (2Z)-2-hydroxypenta-2,4-dienoate + succinate + H(+). It carries out the reaction (2Z,4E,7E)-2-hydroxy-6-oxonona-2,4,7-trienedioate + H2O = (2Z)-2-hydroxypenta-2,4-dienoate + fumarate + H(+). It participates in aromatic compound metabolism; 3-phenylpropanoate degradation. In terms of biological role, catalyzes the cleavage of the C5-C6 bond of 2-hydroxy-6-oxononadienedioate and 2-hydroxy-6-oxononatrienedioate, a dienol ring fission product of the bacterial meta-cleavage pathway for degradation of phenylpropionic acid. This is 2-hydroxy-6-oxononadienedioate/2-hydroxy-6-oxononatrienedioate hydrolase from Escherichia coli O81 (strain ED1a).